A 378-amino-acid chain; its full sequence is UDP-N-acetylenolpyruvoylglucosamine reductase (378 aa).

One can recognise an FAD-binding PCMH-type domain in the interval valine 15–histidine 185. Arginine 163 is an active-site residue. Serine 248 serves as the catalytic Proton donor. The active site involves glutamate 370.

It belongs to the MurB family. FAD serves as cofactor.

It is found in the cytoplasm. The enzyme catalyses UDP-N-acetyl-alpha-D-muramate + NADP(+) = UDP-N-acetyl-3-O-(1-carboxyvinyl)-alpha-D-glucosamine + NADPH + H(+). The protein operates within cell wall biogenesis; peptidoglycan biosynthesis. Functionally, cell wall formation. In Leifsonia xyli subsp. xyli (strain CTCB07), this protein is UDP-N-acetylenolpyruvoylglucosamine reductase.